Here is a 273-residue protein sequence, read N- to C-terminus: Phosphonates import ATP-binding protein PhnC (273 aa).

The region spanning 2–245 is the ABC transporter domain; that stretch reads LRIDKLTKRF…VAREIYGADA (244 aa). 34–41 lines the ATP pocket; it reads GRSGAGKS.

The protein belongs to the ABC transporter superfamily. Phosphonates importer (TC 3.A.1.9.1) family. As to quaternary structure, the complex is composed of two ATP-binding proteins (PhnC), two transmembrane proteins (PhnE) and a solute-binding protein (PhnD).

The protein localises to the cell inner membrane. It catalyses the reaction phosphonate(out) + ATP + H2O = phosphonate(in) + ADP + phosphate + H(+). Its function is as follows. Part of the ABC transporter complex PhnCDE involved in phosphonates import. Responsible for energy coupling to the transport system. In Ruegeria pomeroyi (strain ATCC 700808 / DSM 15171 / DSS-3) (Silicibacter pomeroyi), this protein is Phosphonates import ATP-binding protein PhnC.